The primary structure comprises 434 residues: UDP-glucose 6-dehydrogenase (434 aa).

NAD(+) is bound by residues 2 to 19, valine 11, aspartate 30, lysine 35, threonine 121, and glutamate 152; that span reads NITF…GIIM. Substrate-binding positions include 148–152, lysine 204, asparagine 208, 249–253, and glycine 257; these read EFLRE and FLNAG. Catalysis depends on cysteine 260, which acts as the Nucleophile. Lysine 263 is a binding site for NAD(+). Lysine 321 contributes to the substrate binding site. Arginine 328 provides a ligand contact to NAD(+).

It belongs to the UDP-glucose/GDP-mannose dehydrogenase family.

It catalyses the reaction UDP-alpha-D-glucose + 2 NAD(+) + H2O = UDP-alpha-D-glucuronate + 2 NADH + 3 H(+). Its pathway is nucleotide-sugar biosynthesis; UDP-alpha-D-glucuronate biosynthesis; UDP-alpha-D-glucuronate from UDP-alpha-D-glucose: step 1/1. The sequence is that of UDP-glucose 6-dehydrogenase (udg) from Rickettsia prowazekii (strain Madrid E).